The following is a 323-amino-acid chain: Aldo-keto reductase family 1 member C18 (323 aa).

NADP(+)-binding positions include 20–24 (GFGTY) and Asp50. The active-site Proton donor is Tyr55. Position 117 (His117) interacts with substrate. NADP(+) is bound by residues 166-167 (SN), Gln190, 216-221 (YGALGT), and 270-280 (KSFNEERIREN).

The protein belongs to the aldo/keto reductase family. In terms of assembly, monomer. Post-translationally, the N-terminus is blocked. In terms of tissue distribution, corpus luteum (large luteal cells).

It is found in the cytoplasm. The catalysed reaction is (17R,20S)-17,20-dihydroxypregn-4-en-3-one + NADP(+) = 17alpha-hydroxyprogesterone + NADPH + H(+). The enzyme catalyses (17R,20S)-17,20-dihydroxypregn-4-en-3-one + NAD(+) = 17alpha-hydroxyprogesterone + NADH + H(+). Functionally, catalyzes the conversion of progesterone into 20-alpha-dihydroprogesterone (20 alpha-OHP). The polypeptide is Aldo-keto reductase family 1 member C18 (Akr1c18) (Rattus norvegicus (Rat)).